The sequence spans 205 residues: Protein phosphatase inhibitor 2 family member B (205 aa).

A disordered region spans residues 1 to 44 (MAASTASHRPIKGILKNKTSTTSSMVASAEQPRRSVDEELSKKS). A2 is subject to N-acetylalanine. Required for binding PPP1CC stretches follow at residues 12 to 17 (KGILKN) and 43 to 55 (KSQK…ILAT). Positions 17 to 26 (NKTSTTSSMV) are enriched in polar residues. The span at 31 to 44 (QPRRSVDEELSKKS) shows a compositional bias: basic and acidic residues. The residue at position 44 (S44) is a Phosphoserine. 2 positions are modified to phosphothreonine: T89 and T92. The segment at 111–142 (EPKYRIQEQESSGEEDSDLSPEEREKKRQFEM) is disordered. Residues S121, S122, S127, and S130 each carry the phosphoserine modification. Over residues 121–130 (SSGEEDSDLS) the composition is skewed to acidic residues. Over residues 131 to 142 (PEEREKKRQFEM) the composition is skewed to basic and acidic residues. The segment at 147–150 (HYNE) is required for binding PPP1CC catalytic center, displacing metal ions and inhibition of PPP1CC catalytic activity. The tract at residues 163–205 (KDLHDDDEDEEMLETADGESMNTEESNQGSTPSDQQQNKLRSS) is disordered. Residues 167 to 179 (DDDEDEEMLETAD) are compositionally biased toward acidic residues. Residues 182–205 (SMNTEESNQGSTPSDQQQNKLRSS) are compositionally biased toward polar residues.

It belongs to the protein phosphatase inhibitor 2 family. As to quaternary structure, interacts with PPP1CC. Only detected in spermatozoa, both heads and tails.

In terms of biological role, inhibitor of protein-phosphatase 1. The chain is Protein phosphatase inhibitor 2 family member B from Homo sapiens (Human).